The sequence spans 802 residues: Acetyl-CoA decarbonylase/synthase complex subunit alpha (802 aa).

[4Fe-4S] cluster is bound by residues cysteine 69, cysteine 72, cysteine 73, cysteine 75, cysteine 80, and cysteine 90. Histidine 113 lines the CO pocket. Residues histidine 246, cysteine 274, and cysteine 319 each coordinate [Ni-4Fe-4S] cluster. 4Fe-4S ferredoxin-type domains follow at residues glutamate 404–alanine 432 and serine 442–lysine 473. 8 residues coordinate [4Fe-4S] cluster: cysteine 413, cysteine 416, cysteine 419, cysteine 423, cysteine 451, cysteine 454, cysteine 457, and cysteine 461. [Ni-4Fe-4S] cluster is bound by residues cysteine 519, cysteine 548, and cysteine 583.

This sequence belongs to the Ni-containing carbon monoxide dehydrogenase family. In terms of assembly, heterotetramer of two alpha and two epsilon subunits. The ACDS complex is made up of alpha, epsilon, beta, gamma and delta subunits with a probable stoichiometry of (alpha(2)epsilon(2))(4)-beta(8)-(gamma(1)delta(1))(8). It depends on [4Fe-4S] cluster as a cofactor. Requires [Ni-4Fe-4S] cluster as cofactor.

The catalysed reaction is CO + 2 oxidized [2Fe-2S]-[ferredoxin] + H2O = 2 reduced [2Fe-2S]-[ferredoxin] + CO2 + 2 H(+). The protein operates within one-carbon metabolism; methanogenesis from acetate. In terms of biological role, part of the ACDS complex that catalyzes the reversible cleavage of acetyl-CoA, allowing growth on acetate as sole source of carbon and energy. The alpha-epsilon subcomponent functions as a carbon monoxide dehydrogenase. The polypeptide is Acetyl-CoA decarbonylase/synthase complex subunit alpha (Methanococcoides burtonii (strain DSM 6242 / NBRC 107633 / OCM 468 / ACE-M)).